The sequence spans 257 residues: Protein patched homolog 1 (257 aa).

The Extracellular segment spans residues 1 to 199; that stretch reads AKLQTGTAYL…LDDILKSFSD (199 aa). N-linked (GlcNAc...) asparagine glycosylation is found at N75, N114, and N177. The chain crosses the membrane as a helical span at residues 200 to 220; the sequence is ISVIRVASGYLLMLAYACLTM. An SSD domain is found at 201-257; it reads SVIRVASGYLLMLAYACLTMLRWDCAKSQGAVGLAGVLLVALSVAAGLGLCSLIGIS. At 221–235 the chain is on the cytoplasmic side; that stretch reads LRWDCAKSQGAVGLA. A helical membrane pass occupies residues 236-256; it reads GVLLVALSVAAGLGLCSLIGI.

It belongs to the patched family. In terms of processing, glycosylation is necessary for SHH binding. As to expression, in the eye, detected in neural retina, iris, retinal pigment epithelium, but not in lens.

It is found in the membrane. Its function is as follows. Acts as a receptor for sonic hedgehog (SHH), indian hedgehog (IHH) and desert hedgehog (DHH). Associates with the smoothened protein (SMO) to transduce the hedgehog's proteins signal. This Cynops pyrrhogaster (Japanese fire-bellied newt) protein is Protein patched homolog 1 (PTC1).